The chain runs to 348 residues: Protein RecA (348 aa).

An ATP-binding site is contributed by 69–76; sequence GPESSGKT.

This sequence belongs to the RecA family.

Its subcellular location is the cytoplasm. In terms of biological role, can catalyze the hydrolysis of ATP in the presence of single-stranded DNA, the ATP-dependent uptake of single-stranded DNA by duplex DNA, and the ATP-dependent hybridization of homologous single-stranded DNAs. It interacts with LexA causing its activation and leading to its autocatalytic cleavage. The sequence is that of Protein RecA from Gluconacetobacter polyoxogenes (Acetobacter polyoxogenes).